A 476-amino-acid polypeptide reads, in one-letter code: Nodulation protein NoeA (476 aa).

Not known; does not seem to participate in nod factor synthesis but required for nodulation on some specific Medicago species such as M.littoralis. This chain is Nodulation protein NoeA (noeA), found in Rhizobium meliloti (strain 1021) (Ensifer meliloti).